The chain runs to 459 residues: MSSGRIVQIIGAVIDVEFPRDAVPKVYDALVISEGNLTLEVQQQLGDGVVRTIALGSSEGLRRGLSVTNTNEPIKVPVGTQTLGRIMDVLGNPIDEAGPIGEQERMQIHRAAPAYEELAASEELLETGIKVIDLVCPFAKGGKVGLFGGAGVGKTVNMMELINNIAKEHSGLSVFAGVGERTREGNDFYHEMKDSNVVDKVAMVYGQMNEPPGNRLRVALTGLTMAEKFRDEGRDVLLFVDNIYRYTLAGTEVSALLGRMPSAVGYQPTLAEEMGVLQERITSTKIGSITSVQAVYVPADDLTDPSPATTFAHLDSTVVLSRDIAAKGIYPAIDPLDSTSRQLDPMVIGNEHYLVARGVQSVLQRYKELKDIIAILGMDELSEEDKLTVNRARKIERFLSQPFHVAEVFTGSPGKYVPLKETIRGFKGLLAGDYDHLPEQAFYMVGGIDEAIEKAGKLK.

Position 148-155 (148-155) interacts with ATP; the sequence is GGAGVGKT.

The protein belongs to the ATPase alpha/beta chains family. In terms of assembly, F-type ATPases have 2 components, CF(1) - the catalytic core - and CF(0) - the membrane proton channel. CF(1) has five subunits: alpha(3), beta(3), gamma(1), delta(1), epsilon(1). CF(0) has three main subunits: a(1), b(2) and c(9-12). The alpha and beta chains form an alternating ring which encloses part of the gamma chain. CF(1) is attached to CF(0) by a central stalk formed by the gamma and epsilon chains, while a peripheral stalk is formed by the delta and b chains.

The protein resides in the cell inner membrane. The enzyme catalyses ATP + H2O + 4 H(+)(in) = ADP + phosphate + 5 H(+)(out). In terms of biological role, produces ATP from ADP in the presence of a proton gradient across the membrane. The catalytic sites are hosted primarily by the beta subunits. In Cellvibrio japonicus (strain Ueda107) (Pseudomonas fluorescens subsp. cellulosa), this protein is ATP synthase subunit beta.